Here is a 301-residue protein sequence, read N- to C-terminus: Polyamine aminopropyltransferase (301 aa).

Residues 4 to 240 form the PABS domain; it reads WHWLLEWQTP…GLWGFVYGGV (237 aa). Position 33 (Gln-33) interacts with S-methyl-5'-thioadenosine. Positions 64 and 89 each coordinate spermidine. S-methyl-5'-thioadenosine-binding positions include Asp-109 and 141-142; that span reads DG. The Proton acceptor role is filled by Asp-159.

This sequence belongs to the spermidine/spermine synthase family. As to quaternary structure, homodimer or homotetramer.

It is found in the cytoplasm. It carries out the reaction S-adenosyl 3-(methylsulfanyl)propylamine + putrescine = S-methyl-5'-thioadenosine + spermidine + H(+). Its pathway is amine and polyamine biosynthesis; spermidine biosynthesis; spermidine from putrescine: step 1/1. Functionally, catalyzes the irreversible transfer of a propylamine group from the amino donor S-adenosylmethioninamine (decarboxy-AdoMet) to putrescine (1,4-diaminobutane) to yield spermidine. In Saccharolobus islandicus (strain L.S.2.15 / Lassen #1) (Sulfolobus islandicus), this protein is Polyamine aminopropyltransferase.